A 313-amino-acid chain; its full sequence is Methionyl-tRNA formyltransferase (313 aa).

The tract at residues 32–51 is disordered; that stretch reads QPDRRKGRGKELQPPPAKRK. 109–112 is a (6S)-5,6,7,8-tetrahydrofolate binding site; it reads SLLP.

This sequence belongs to the Fmt family.

The enzyme catalyses L-methionyl-tRNA(fMet) + (6R)-10-formyltetrahydrofolate = N-formyl-L-methionyl-tRNA(fMet) + (6S)-5,6,7,8-tetrahydrofolate + H(+). In terms of biological role, attaches a formyl group to the free amino group of methionyl-tRNA(fMet). The formyl group appears to play a dual role in the initiator identity of N-formylmethionyl-tRNA by promoting its recognition by IF2 and preventing the misappropriation of this tRNA by the elongation apparatus. In Natranaerobius thermophilus (strain ATCC BAA-1301 / DSM 18059 / JW/NM-WN-LF), this protein is Methionyl-tRNA formyltransferase.